A 973-amino-acid chain; its full sequence is Mediator of RNA polymerase II transcription subunit 16 (973 aa).

Belongs to the Mediator complex subunit 16 family. In terms of assembly, component of the Mediator complex.

Its subcellular location is the nucleus. In terms of biological role, component of the Mediator complex, a coactivator involved in the regulated transcription of nearly all RNA polymerase II-dependent genes. Mediator functions as a bridge to convey information from gene-specific regulatory proteins to the basal RNA polymerase II transcription machinery. Mediator is recruited to promoters by direct interactions with regulatory proteins and serves as a scaffold for the assembly of a functional preinitiation complex with RNA polymerase II and the general transcription factors. This is Mediator of RNA polymerase II transcription subunit 16 (SIN4) from Candida glabrata (strain ATCC 2001 / BCRC 20586 / JCM 3761 / NBRC 0622 / NRRL Y-65 / CBS 138) (Yeast).